Reading from the N-terminus, the 1064-residue chain is Serine/threonine protein kinase KIN1 (1064 aa).

Positions Met1–His113 are disordered. Residues Thr8–Ala36 are compositionally biased toward polar residues. A compositionally biased stretch (basic and acidic residues) spans Ala74 to Ala91. A compositionally biased stretch (polar residues) spans Lys93–Met108. Positions Trp120–Met398 constitute a Protein kinase domain. ATP is bound by residues Val126–Val134 and Lys149. Asp269 (proton acceptor) is an active-site residue. Ser534 carries the phosphoserine modification. The interval Ser549–Gln621 is disordered. Over residues Thr557–Gly571 the composition is skewed to polar residues. Ser593 carries the phosphoserine modification. Positions Lys598–Glu608 are enriched in basic and acidic residues. A Phosphoserine modification is found at Ser646. Disordered regions lie at residues Thr652–His672, Met694–Leu714, Glu762–Arg797, Leu823–Asp843, and His958–Thr1016. The span at Glu654–Lys670 shows a compositional bias: polar residues. Ser764 carries the post-translational modification Phosphoserine. Basic residues predominate over residues Lys779–His794. 3 stretches are compositionally biased toward polar residues: residues Asp832 to Asp843, Arg963 to Glu989, and Gly998 to Thr1016. Residue Ser986 is modified to Phosphoserine. One can recognise a KA1 domain in the interval Thr1015 to Leu1064.

It belongs to the protein kinase superfamily. CAMK Ser/Thr protein kinase family. NIM1 subfamily. As to quaternary structure, interacts with SEC9 and SRO7. In terms of processing, autophosphorylated.

It is found in the cytoplasm. The protein resides in the cell membrane. The catalysed reaction is L-seryl-[protein] + ATP = O-phospho-L-seryl-[protein] + ADP + H(+). It carries out the reaction L-threonyl-[protein] + ATP = O-phospho-L-threonyl-[protein] + ADP + H(+). Its function is as follows. Serine/threonine protein kinase involved in the regulation of exocytosis. Induces phosphorylation of SEC9 and its release from the plasma membrane to the cytosol. This chain is Serine/threonine protein kinase KIN1 (KIN1), found in Saccharomyces cerevisiae (strain ATCC 204508 / S288c) (Baker's yeast).